The primary structure comprises 154 residues: Superoxide dismutase [Cu-Zn] (154 aa).

Cu cation contacts are provided by histidine 47, histidine 49, and histidine 64. A disulfide bond links cysteine 58 and cysteine 147. 4 residues coordinate Zn(2+): histidine 64, histidine 72, histidine 81, and aspartate 84. Residue histidine 121 participates in Cu cation binding. Residue arginine 144 coordinates substrate.

Belongs to the Cu-Zn superoxide dismutase family. Homodimer. The cofactor is Cu cation. Zn(2+) is required as a cofactor.

The protein resides in the cytoplasm. The enzyme catalyses 2 superoxide + 2 H(+) = H2O2 + O2. In terms of biological role, destroys radicals which are normally produced within the cells and which are toxic to biological systems. In Candida albicans (Yeast), this protein is Superoxide dismutase [Cu-Zn] (SOD1).